A 133-amino-acid chain; its full sequence is ATP synthase epsilon chain, chloroplastic (133 aa).

The protein belongs to the ATPase epsilon chain family. In terms of assembly, F-type ATPases have 2 components, CF(1) - the catalytic core - and CF(0) - the membrane proton channel. CF(1) has five subunits: alpha(3), beta(3), gamma(1), delta(1), epsilon(1). CF(0) has three main subunits: a, b and c.

The protein resides in the plastid. The protein localises to the chloroplast thylakoid membrane. Produces ATP from ADP in the presence of a proton gradient across the membrane. The polypeptide is ATP synthase epsilon chain, chloroplastic (Lactuca sativa (Garden lettuce)).